Reading from the N-terminus, the 105-residue chain is MEHPAYTLSLLTTAGGLMGYYRKGSIPSLVSGLVFGSVYGIAGYLLHMNRDGGLEMALGASTLLLGAGVIRGMPSRFTKPVPVVLTALGGLGSYYYYNKYKEFYP.

Helical transmembrane passes span 26–46 (IPSLVSGLVFGSVYGIAGYLL), 53–73 (GLEMALGASTLLLGAGVIRGM), and 77–97 (FTKPVPVVLTALGGLGSYYYY).

This sequence belongs to the TMEM14 family.

It localises to the mitochondrion. It is found in the membrane. This is TMEM14 protein homolog YJR085C from Saccharomyces cerevisiae (strain ATCC 204508 / S288c) (Baker's yeast).